A 338-amino-acid chain; its full sequence is DNA-directed RNA polymerase subunit alpha (338 aa).

Positions 1–234 (MIQKNWQELI…DQLEIFVNFE (234 aa)) are alpha N-terminal domain (alpha-NTD). The segment at 250 to 338 (FSPALLKKVD…ELAKRFEEHY (89 aa)) is alpha C-terminal domain (alpha-CTD).

The protein belongs to the RNA polymerase alpha chain family. Homodimer. The RNAP catalytic core consists of 2 alpha, 1 beta, 1 beta' and 1 omega subunit. When a sigma factor is associated with the core the holoenzyme is formed, which can initiate transcription.

It carries out the reaction RNA(n) + a ribonucleoside 5'-triphosphate = RNA(n+1) + diphosphate. DNA-dependent RNA polymerase catalyzes the transcription of DNA into RNA using the four ribonucleoside triphosphates as substrates. The sequence is that of DNA-directed RNA polymerase subunit alpha from Xanthobacter autotrophicus (strain ATCC BAA-1158 / Py2).